A 364-amino-acid chain; its full sequence is Developmentally-regulated GTP-binding protein 2 (364 aa).

Lys21 carries the (3S)-3-hydroxylysine modification. Residues 63-288 (ARVALIGFPS…LLEMLWEYLA (226 aa)) form the OBG-type G domain. Residues 69–76 (GFPSVGKS), 94–98 (FTTLT), 115–118 (DLPG), 246–249 (NKID), and 269–271 (SCG) each bind GTP. Mg(2+) contacts are provided by Ser76 and Thr96. Residues 288–363 (ALTCIYTKKR…EHEDVIQIVK (76 aa)) form the TGS domain.

It belongs to the TRAFAC class OBG-HflX-like GTPase superfamily. OBG GTPase family. In terms of assembly, interacts with RWDD1; this interaction confers protection to polyubiquitination and proteolytic degradation. Interacts with JMJD7; this interaction is direct. Mg(2+) serves as cofactor. In terms of processing, hydroxylated (with S stereochemistry) at C-3 of Lys-21 by JMJD7; this modification hinders trypsin-catalyzed proteolysis in vitro. Polyubiquitinated. In terms of tissue distribution, highest levels in skeletal muscle, heart and kidney. Low levels in colon, thymus, spleen, small intestine, lung and Leukocytes.

The protein localises to the nucleus. Its subcellular location is the cytoplasm. It catalyses the reaction GTP + H2O = GDP + phosphate + H(+). Functionally, catalyzes the conversion of GTP to GDP through hydrolysis of the gamma-phosphate bond in GTP. When hydroxylated at C-3 of 'Lys-21' by JMJD7, may bind to RNA and play a role in translation. In Homo sapiens (Human), this protein is Developmentally-regulated GTP-binding protein 2.